A 281-amino-acid polypeptide reads, in one-letter code: Large ribosomal subunit protein uL2 (281 aa).

Residues 215–281 (LGRRPHTRGV…RRNNRKDSKK (67 aa)) form a disordered region. The span at 258–269 (KTRDNKSTDKFI) shows a compositional bias: basic and acidic residues. Residues 270–281 (VRRRNNRKDSKK) are compositionally biased toward basic residues.

The protein belongs to the universal ribosomal protein uL2 family. Part of the 50S ribosomal subunit. Forms a bridge to the 30S subunit in the 70S ribosome.

One of the primary rRNA binding proteins. Required for association of the 30S and 50S subunits to form the 70S ribosome, for tRNA binding and peptide bond formation. It has been suggested to have peptidyltransferase activity; this is somewhat controversial. Makes several contacts with the 16S rRNA in the 70S ribosome. This chain is Large ribosomal subunit protein uL2, found in Pelagibacter ubique (strain HTCC1062).